The chain runs to 346 residues: UPF0718 protein YraQ (346 aa).

A run of 9 helical transmembrane segments spans residues 12–32 (PIQWWKPALFFLVVIAGLWYV), 71–91 (MIYFLAVWKAAVLGVILGSLI), 113–133 (LLGTLFSLPGMMCTCCAAPVA), 146–166 (ALAFWMGNPVLNPATLVFMGF), 167–187 (VLGWGFAAIRLVAGLVMVLLI), 223–243 (ALWTLFWSTIPVYILAVLVLG), 260–280 (SLMWVVAMAVAGCLFVIPTAA), 296–316 (APALALLMTLPAVSLPSLIML), and 326–346 (WLTGAMVAVSGVIVGGLALLF).

This sequence belongs to the UPF0718 family.

The protein localises to the cell membrane. This chain is UPF0718 protein YraQ (yraQ), found in Escherichia coli (strain K12).